Consider the following 429-residue polypeptide: Adenylosuccinate synthetase (429 aa).

GTP is bound by residues 12 to 18 (GDEGKGK) and 40 to 42 (GHT). Asp-13 functions as the Proton acceptor in the catalytic mechanism. Residues Asp-13 and Gly-40 each contribute to the Mg(2+) site. IMP contacts are provided by residues 13–16 (DEGK), 38–41 (NAGH), Thr-128, Arg-142, Gln-223, Thr-238, and Arg-302. Catalysis depends on His-41, which acts as the Proton donor. 298–304 (VNTGRKR) provides a ligand contact to substrate. GTP is bound by residues Arg-304, 330 to 332 (KLD), and 412 to 414 (GVG).

Belongs to the adenylosuccinate synthetase family. In terms of assembly, homodimer. It depends on Mg(2+) as a cofactor.

It localises to the cytoplasm. The catalysed reaction is IMP + L-aspartate + GTP = N(6)-(1,2-dicarboxyethyl)-AMP + GDP + phosphate + 2 H(+). The protein operates within purine metabolism; AMP biosynthesis via de novo pathway; AMP from IMP: step 1/2. Functionally, plays an important role in the de novo pathway of purine nucleotide biosynthesis. Catalyzes the first committed step in the biosynthesis of AMP from IMP. In Corynebacterium diphtheriae (strain ATCC 700971 / NCTC 13129 / Biotype gravis), this protein is Adenylosuccinate synthetase.